The sequence spans 278 residues: Small ribosomal subunit protein uS9m (278 aa).

A mitochondrion-targeting transit peptide spans 1-10 (MFSRLSLFRR). The segment at 259–278 (VERKKPGKKKARKMPTWVKR) is disordered.

This sequence belongs to the universal ribosomal protein uS9 family. In terms of assembly, component of the mitochondrial small ribosomal subunit (mt-SSU). Mature yeast 74S mitochondrial ribosomes consist of a small (37S) and a large (54S) subunit. The 37S small subunit contains a 15S ribosomal RNA (15S mt-rRNA) and 34 different proteins. The 54S large subunit contains a 21S rRNA (21S mt-rRNA) and 46 different proteins.

It localises to the mitochondrion. In terms of biological role, component of the mitochondrial ribosome (mitoribosome), a dedicated translation machinery responsible for the synthesis of mitochondrial genome-encoded proteins, including at least some of the essential transmembrane subunits of the mitochondrial respiratory chain. The mitoribosomes are attached to the mitochondrial inner membrane and translation products are cotranslationally integrated into the membrane. The chain is Small ribosomal subunit protein uS9m (MRPS9) from Saccharomyces cerevisiae (strain ATCC 204508 / S288c) (Baker's yeast).